Consider the following 252-residue polypeptide: Transmembrane ascorbate-dependent reductase CYB561 (252 aa).

The residue at position 1 (M1) is an N-acetylmethionine. Topologically, residues 1 to 17 (MESPAGRTPAPGALPYY) are cytoplasmic. A helical membrane pass occupies residues 18 to 38 (VAFSQLLGLTVVAVTGAWLGA). The Cytochrome b561 domain occupies 20-221 (FSQLLGLTVV…FGAVVLYILT (202 aa)). The Vesicular segment spans residues 39 to 52 (YRGGIAWESALQFN). The chain crosses the membrane as a helical span at residues 53 to 73 (VHPLCMIIGLVFLQGDALLVY). Heme b contacts are provided by H54, R74, and K81. Over 74 to 85 (RVFRNEAKRTTK) the chain is Cytoplasmic. L-ascorbate contacts are provided by K81 and K85. Residues 86–106 (ILHGLLHVLAFVIALVGLVAV) form a helical membrane-spanning segment. Heme b is bound by residues H88, 117-120 (DLYS), and H122. The Vesicular segment spans residues 107–125 (FDYHRKKGIADLYSLHSWC). The helical transmembrane segment at 126–146 (GILVFVLFLAQWLVGLGFFLF) threads the bilayer. The Cytoplasmic segment spans residues 147–159 (PGASFSLRSRYRP). R154 provides a ligand contact to L-ascorbate. The chain crosses the membrane as a helical span at residues 160–180 (QHVFFGAAIFLLSVGTALLGL). H161 and E182 together coordinate heme b. Residues 181–199 (KEALLFQLGTKYSAFESEG) lie on the Vesicular side of the membrane. A helical membrane pass occupies residues 200-220 (VLANVLGLLLVAFGAVVLYIL). At 221–252 (TRADWKRPLQAEEQALSMDFKTLTEGDSPSSQ) the chain is on the cytoplasmic side. K226 lines the heme b pocket. A phosphoserine mark is found at S248 and S250.

Heme b serves as cofactor.

The protein localises to the cytoplasmic vesicle. It localises to the secretory vesicle. It is found in the chromaffin granule membrane. It carries out the reaction monodehydro-L-ascorbate radical(out) + L-ascorbate(in) = monodehydro-L-ascorbate radical(in) + L-ascorbate(out). Transmembrane reductase that uses ascorbate as an electron donor in the cytoplasm and transfers electrons across membranes to reduce monodehydro-L-ascorbate radical in the lumen of secretory vesicles. It is therefore involved the regeneration and homeostasis within secretory vesicles of ascorbate which in turn provides reducing equivalents needed to support the activity of intravesicular enzymes. This chain is Transmembrane ascorbate-dependent reductase CYB561 (CYB561), found in Sus scrofa (Pig).